We begin with the raw amino-acid sequence, 259 residues long: Deoxyribose-phosphate aldolase (259 aa).

Residue D101 is the Proton donor/acceptor of the active site. K166 (schiff-base intermediate with acetaldehyde) is an active-site residue. K200 acts as the Proton donor/acceptor in catalysis.

It belongs to the DeoC/FbaB aldolase family. DeoC type 2 subfamily.

The protein resides in the cytoplasm. It carries out the reaction 2-deoxy-D-ribose 5-phosphate = D-glyceraldehyde 3-phosphate + acetaldehyde. The protein operates within carbohydrate degradation; 2-deoxy-D-ribose 1-phosphate degradation; D-glyceraldehyde 3-phosphate and acetaldehyde from 2-deoxy-alpha-D-ribose 1-phosphate: step 2/2. Catalyzes a reversible aldol reaction between acetaldehyde and D-glyceraldehyde 3-phosphate to generate 2-deoxy-D-ribose 5-phosphate. The polypeptide is Deoxyribose-phosphate aldolase (Glaesserella parasuis serovar 5 (strain SH0165) (Haemophilus parasuis)).